The primary structure comprises 864 residues: Disintegrin and metalloproteinase domain-containing protein 15 (864 aa).

The N-terminal stretch at 1 to 17 (MRLALLWALGLLGAGSP) is a signal peptide. The disordered stretch occupies residues 18–45 (RPSPPLPNIGGTEEEQQASPERTLSGSM). Positions 18 to 207 (RPSPPLPNIG…EQHHAHRLKR (190 aa)) are excised as a propeptide. The segment covering 34–45 (QASPERTLSGSM) has biased composition (polar residues). Residues 177-184 (HTCAPSWH) carry the Cysteine switch motif. Cysteine 179 lines the Zn(2+) pocket. The Extracellular segment spans residues 208 to 696 (DVVTETKIVE…TQLKATSSLT (489 aa)). Residues 214–415 (KIVELVIVAD…GMGSCLFERQ (202 aa)) enclose the Peptidase M12B domain. Residue asparagine 238 is glycosylated (N-linked (GlcNAc...) asparagine). Disulfide bonds link cysteine 324-cysteine 410, cysteine 366-cysteine 394, cysteine 368-cysteine 377, and cysteine 481-cysteine 501. A Zn(2+)-binding site is contributed by histidine 349. The active site involves glutamate 350. The Zn(2+) site is built by histidine 353 and histidine 359. Asparagine 390 and asparagine 393 each carry an N-linked (GlcNAc...) asparagine glycan. Residues 422–509 (SSLCGNMFVD…QCPSDIRLGD (88 aa)) enclose the Disintegrin domain. N-linked (GlcNAc...) asparagine glycans are attached at residues asparagine 607 and asparagine 612. 3 disulfides stabilise this stretch: cysteine 658–cysteine 668, cysteine 662–cysteine 674, and cysteine 676–cysteine 685. The EGF-like domain maps to 658–686 (CRRKCHGHGVCDSSGHCRCEEGWAPPDCM). Residues 697–717 (TGLLLSLLLLLVLVLLGASYW) form a helical membrane-spanning segment. Residues tyrosine 716 and tyrosine 736 each carry the phosphotyrosine; by HCK and LCK modification. Over 718–864 (HRARLHQRLC…PPPAASSLYL (147 aa)) the chain is Cytoplasmic. Residues 736–864 (YRAPQSCPPE…PPPAASSLYL (129 aa)) form a disordered region. Over residues 741–750 (SCPPERPGPP) the composition is skewed to pro residues. Polar residues predominate over residues 752–762 (RAQQMTGTKQA). 2 stretches are compositionally biased toward pro residues: residues 768 to 780 (PVPP…PNPV) and 814 to 825 (TKPPPPRKPLPA). Short sequence motifs (SH3-binding) lie at residues 816-822 (PPPPRKP) and 851-857 (RPAPPPP).

In terms of assembly, interacts specifically with Src family protein-tyrosine kinases (PTKs). Interacts with ITAGV-ITGB3 (vitronectin receptor). Interacts with SH3GL2 and SNX9; this interaction occurs preferentially with ADAM15 precursor, rather than the processed form, suggesting it occurs in a secretory pathway compartment prior to the medial Golgi. Interacts with ITAG9-ITGB1. Interacts with SH3PXD2A. Interacts with ITAGV-ITGB1. Interacts with GRB2, HCK, ITSN1, ITSN2, LYN, MAPK1, MAPK3, NCF1, NCK1, nephrocystin, PTK6, SNX33, LCK and SRC. The cofactor is Zn(2+). In terms of processing, the precursor is cleaved by a furin endopeptidase. An additional membrane proximal site of cleavage affects a small percentage of the proteins and results in disulfide-linked fragments. The prodomain is apparently cleaved in several positions that are N-terminal of the furin cleavage site. Post-translationally, may be partially sialylated. Phosphorylation increases association with PTKs. As to expression, expressed moderately in pericytes of retina. Expressed in testis and in spermatozoa from the caput, corpus, and cauda epididymis, as well as in non-capacitated and acrosome-reacted sperm (at protein level). Highly expressed in heart, brain, lung, and kidney. Expressed at lower levels in spleen, liver, testis and muscle.

It localises to the endomembrane system. The protein localises to the cell junction. Its subcellular location is the adherens junction. It is found in the cell projection. The protein resides in the cilium. It localises to the flagellum. The protein localises to the cytoplasmic vesicle. Its subcellular location is the secretory vesicle. It is found in the acrosome. Functionally, active metalloproteinase with gelatinolytic and collagenolytic activity. Plays a role in the wound healing process. Mediates both heterotypic intraepithelial cell/T-cell interactions and homotypic T-cell aggregation. Inhibits beta-1 integrin-mediated cell adhesion and migration of airway smooth muscle cells. Suppresses cell motility on or towards fibronectin possibly by driving alpha-v/beta-1 integrin (ITAGV-ITGB1) cell surface expression via ERK1/2 inactivation. Cleaves E-cadherin in response to growth factor deprivation. Plays a role in glomerular cell migration. Plays a role in pathological neovascularization. May play a role in cartilage remodeling. May be proteolytically processed, during sperm epididymal maturation and the acrosome reaction. May play a role in sperm-egg binding through its disintegrin domain. Interactions with egg membrane could be mediated via binding between the disintegrin-like domain to one or more integrin receptors on the egg. The protein is Disintegrin and metalloproteinase domain-containing protein 15 (Adam15) of Mus musculus (Mouse).